A 193-amino-acid polypeptide reads, in one-letter code: NAD(P)H-quinone oxidoreductase subunit I (193 aa).

4Fe-4S ferredoxin-type domains follow at residues 55–84 (GRIH…VDWE) and 95–124 (KHYS…MTEE). Cys-64, Cys-67, Cys-70, Cys-74, Cys-104, Cys-107, Cys-110, and Cys-114 together coordinate [4Fe-4S] cluster. Residues 169 to 193 (LDPHDLPSGNQRSGKRPEEIIAESD) are disordered.

The protein belongs to the complex I 23 kDa subunit family. As to quaternary structure, NDH-1 is composed of at least 11 different subunits. Requires [4Fe-4S] cluster as cofactor.

The protein localises to the cellular thylakoid membrane. The enzyme catalyses a plastoquinone + NADH + (n+1) H(+)(in) = a plastoquinol + NAD(+) + n H(+)(out). It carries out the reaction a plastoquinone + NADPH + (n+1) H(+)(in) = a plastoquinol + NADP(+) + n H(+)(out). NDH-1 shuttles electrons from an unknown electron donor, via FMN and iron-sulfur (Fe-S) centers, to quinones in the respiratory and/or the photosynthetic chain. The immediate electron acceptor for the enzyme in this species is believed to be plastoquinone. Couples the redox reaction to proton translocation, and thus conserves the redox energy in a proton gradient. In Rippkaea orientalis (strain PCC 8801 / RF-1) (Cyanothece sp. (strain PCC 8801)), this protein is NAD(P)H-quinone oxidoreductase subunit I.